A 40-amino-acid chain; its full sequence is Photosystem II reaction center protein J (40 aa).

Residues 8–28 (IPLWLIGTVTGIPVIGSIGIF) form a helical membrane-spanning segment.

The protein belongs to the PsbJ family. PSII is composed of 1 copy each of membrane proteins PsbA, PsbB, PsbC, PsbD, PsbE, PsbF, PsbH, PsbI, PsbJ, PsbK, PsbL, PsbM, PsbT, PsbX, PsbY, PsbZ, Psb30/Ycf12, at least 3 peripheral proteins of the oxygen-evolving complex and a large number of cofactors. It forms dimeric complexes.

It is found in the plastid. Its subcellular location is the chloroplast thylakoid membrane. One of the components of the core complex of photosystem II (PSII). PSII is a light-driven water:plastoquinone oxidoreductase that uses light energy to abstract electrons from H(2)O, generating O(2) and a proton gradient subsequently used for ATP formation. It consists of a core antenna complex that captures photons, and an electron transfer chain that converts photonic excitation into a charge separation. This chain is Photosystem II reaction center protein J, found in Chloranthus spicatus (Chulantree).